The primary structure comprises 367 residues: S-adenosylmethionine decarboxylase proenzyme 3 (367 aa).

Residues Glu-9 and Glu-12 contribute to the active site. Catalysis depends on Ser-69, which acts as the Schiff-base intermediate with substrate; via pyruvic acid. Ser-69 bears the Pyruvic acid (Ser); by autocatalysis mark. Cys-83 functions as the Proton donor; for catalytic activity in the catalytic mechanism. Active-site proton acceptor; for processing activity residues include Ser-234 and His-247.

The protein belongs to the eukaryotic AdoMetDC family. Requires pyruvate as cofactor. In terms of processing, is synthesized initially as an inactive proenzyme. Formation of the active enzyme involves a self-maturation process in which the active site pyruvoyl group is generated from an internal serine residue via an autocatalytic post-translational modification. Two non-identical subunits are generated from the proenzyme in this reaction, and the pyruvate is formed at the N-terminus of the alpha chain, which is derived from the carboxyl end of the proenzyme. The post-translation cleavage follows an unusual pathway, termed non-hydrolytic serinolysis, in which the side chain hydroxyl group of the serine supplies its oxygen atom to form the C-terminus of the beta chain, while the remainder of the serine residue undergoes an oxidative deamination to produce ammonia and the pyruvoyl group blocking the N-terminus of the alpha chain.

The enzyme catalyses S-adenosyl-L-methionine + H(+) = S-adenosyl 3-(methylsulfanyl)propylamine + CO2. Its pathway is amine and polyamine biosynthesis; S-adenosylmethioninamine biosynthesis; S-adenosylmethioninamine from S-adenosyl-L-methionine: step 1/1. This is S-adenosylmethionine decarboxylase proenzyme 3 (SAMDC3) from Brassica juncea (Indian mustard).